The following is a 229-amino-acid chain: Large ribosomal subunit protein uL1 (229 aa).

It belongs to the universal ribosomal protein uL1 family. As to quaternary structure, part of the 50S ribosomal subunit.

Its function is as follows. Binds directly to 23S rRNA. The L1 stalk is quite mobile in the ribosome, and is involved in E site tRNA release. In terms of biological role, protein L1 is also a translational repressor protein, it controls the translation of the L11 operon by binding to its mRNA. The chain is Large ribosomal subunit protein uL1 from Mycoplasmopsis pulmonis (strain UAB CTIP) (Mycoplasma pulmonis).